The following is a 496-amino-acid chain: RNA-binding motif protein, Y chromosome, family 1 member F/J (496 aa).

One can recognise an RRM domain in the interval 8 to 85 (GKLFIGGLNR…KAIKVEQAKK (78 aa)). Disordered stretches follow at residues 81–345 (EQAK…YAPP) and 452–496 (KDQR…SSRY). 2 stretches are compositionally biased toward low complexity: residues 97-114 (PASS…SARG) and 149-159 (PVKRGPSSRSG). Over residues 175–184 (NSWMGSQGPM) the composition is skewed to polar residues. 6 stretches are compositionally biased toward basic and acidic residues: residues 204-214 (RNDRMSTRHDG), 242-253 (DNGHSNRDEHSS), 276-289 (AYRD…DESY), 313-326 (GYRD…HESY), 335-345 (SSRETRDYAPP), and 484-496 (GESR…SSRY).

Interacts with splicing factor proteins SFRS3/SRP20, TRA2B/SFRS10, KHDRBS1/SAM68 and KHDRBS3. In terms of tissue distribution, testis-specific.

Its subcellular location is the nucleus. In terms of biological role, RNA-binding protein which may be involved in spermatogenesis. Required for sperm development, possibly by participating in pre-mRNA splicing in the testis. This Homo sapiens (Human) protein is RNA-binding motif protein, Y chromosome, family 1 member F/J (RBMY1F).